The primary structure comprises 551 residues: C6 finger transcription factor imqK (551 aa).

The segment at residues 11–53 is a DNA-binding region (zn(2)-C6 fungal-type); the sequence is CDRCRGQKLRCVRLPGPAREDSPRSARSVNQPCERCKRAKVVC. Disordered stretches follow at residues 280–302 and 351–378; these read RQGMSAASDPNYPASGLGETSPS and NEYSSSRSQSRNHSTSASSRSKDGRISA. Residues 351–369 show a composition bias toward low complexity; it reads NEYSSSRSQSRNHSTSASS.

Its subcellular location is the nucleus. Its function is as follows. C6 finger transcription factor that positively regulates the cluster that mediates the biosynthesis of imizoquins A to D, tripeptide-derived alkaloids that serve a protective role against oxidative stress that are essential for normal germination. This is C6 finger transcription factor imqK from Aspergillus flavus (strain ATCC 200026 / FGSC A1120 / IAM 13836 / NRRL 3357 / JCM 12722 / SRRC 167).